Here is a 576-residue protein sequence, read N- to C-terminus: MNIFNQLKQDIIAASRQLYNNQEIANIVTIETSKDNFNGDLSSNIAMIIAAKENMPPRTVALKFKEILITLPYIASIEIAGPGFINFTIKAESWQIAIKNILQHEGKFFEIDIDKNKYINIEYVSANPTGPMHIGHARGAVYGDVLARILQKVGYNVTKEYYVNDAGSQINDLVSTVLLRYREALGEKITIPVGLYPGEYLIPVGQILVKEYGNKLLVMDEEERFKIVKNFAVEKMLDLNRKDLEELGIKHDLFFSEQSLHDKGKIEEIVKLLTNMGLIYEGTLPAPKGKIHAKWDNRVQKLFKSTKYGDSQDRPIEKADGSWSYFASDLAYAKDKIDRGANHLIYVLGADHSGYVKRIEAIVKALGKEQIKVDVKICQLVNFIENGVPVKMSKRLGNFASVQDVNHEVGKDIIRFMMLTRQNDKPLDFDLVKVKEQSRENPIFYVQYAHVRTVSILSKAMELMPESYSSFEAGIYDLSLLSSEEEIDIIKLLAAWTKTLEVSAKYFEPHRIALYLINLASKFHSIWNFGKENSDYRFVIENNKELTTARLALAKAIQKVIASGFEVIGVEPMNKM.

Residues 126-136 (ANPTGPMHIGH) carry the 'HIGH' region motif.

The protein belongs to the class-I aminoacyl-tRNA synthetase family. Monomer.

The protein resides in the cytoplasm. It catalyses the reaction tRNA(Arg) + L-arginine + ATP = L-arginyl-tRNA(Arg) + AMP + diphosphate. The protein is Arginine--tRNA ligase of Rickettsia canadensis (strain McKiel).